The chain runs to 122 residues: Large ribosomal subunit protein uL18 (122 aa).

It belongs to the universal ribosomal protein uL18 family. In terms of assembly, part of the 50S ribosomal subunit; part of the 5S rRNA/L5/L18/L25 subcomplex. Contacts the 5S and 23S rRNAs.

Functionally, this is one of the proteins that bind and probably mediate the attachment of the 5S RNA into the large ribosomal subunit, where it forms part of the central protuberance. The sequence is that of Large ribosomal subunit protein uL18 from Heliobacterium modesticaldum (strain ATCC 51547 / Ice1).